Here is a 212-residue protein sequence, read N- to C-terminus: Adenylate kinase (212 aa).

Gly10–Thr15 contributes to the ATP binding site. Residues Ser30–Val59 form an NMP region. Residues Thr31, Arg36, Glu57 to Val59, Gly86 to Arg89, and Gln93 contribute to the AMP site. The interval Gly127 to Asp159 is LID. ATP is bound by residues Arg128 and Thr137 to Phe138. AMP contacts are provided by Arg156 and Arg167. Position 195 (Gln195) interacts with ATP.

The protein belongs to the adenylate kinase family. As to quaternary structure, monomer.

Its subcellular location is the cytoplasm. The enzyme catalyses AMP + ATP = 2 ADP. Its pathway is purine metabolism; AMP biosynthesis via salvage pathway; AMP from ADP: step 1/1. Its function is as follows. Catalyzes the reversible transfer of the terminal phosphate group between ATP and AMP. Plays an important role in cellular energy homeostasis and in adenine nucleotide metabolism. In Streptococcus agalactiae serotype Ia (strain ATCC 27591 / A909 / CDC SS700), this protein is Adenylate kinase.